The following is a 454-amino-acid chain: F-box/WD repeat-containing protein 2 (454 aa).

In terms of domain architecture, F-box spans 54–101; sequence RDFLKLLPLELSFYLLKWLDPQTLLTCCLVSKQWNKVISACTEVWQTA. 4 WD repeats span residues 146-183, 185-221, 224-265, and 276-314; these read GHSA…CVYG, QTHT…RTQH, GHTG…NTLT, and LQQC…NCKC. The residue at position 298 (K298) is an N6-acetyllysine.

As to quaternary structure, directly interacts with SKP1 and CUL1.

Functionally, substrate-recognition component of the SCF (SKP1-CUL1-F-box protein)-type E3 ubiquitin ligase complex. The chain is F-box/WD repeat-containing protein 2 from Rattus norvegicus (Rat).